Reading from the N-terminus, the 65-residue chain is Pancreatic polypeptide prohormone (65 aa).

Tyrosine amide is present on Tyr-36. A propeptide spanning residues 59–65 (ELSPMGA) is cleaved from the precursor.

This sequence belongs to the NPY family.

It localises to the secreted. In terms of biological role, hormone secreted by pancreatic cells that acts as a regulator of pancreatic and gastrointestinal functions probably by signaling through the G protein-coupled receptor NPY4R2. This chain is Pancreatic polypeptide prohormone (PPY), found in Sus scrofa (Pig).